A 26-amino-acid polypeptide reads, in one-letter code: uncharacterized protein (26 aa).

It belongs to the asfivirus E66L family.

This is an uncharacterized protein from Ornithodoros (relapsing fever ticks).